The chain runs to 156 residues: Snaclec trimecetin subunit alpha (156 aa).

An N-terminal signal peptide occupies residues 1–23; that stretch reads MGRFIFVSFGLLVVFLSLSGTGA. Intrachain disulfides connect Cys-25–Cys-36, Cys-53–Cys-150, and Cys-125–Cys-142. The region spanning 32–151 is the C-type lectin domain; sequence FRRYCYKPFK…CGERNLFMCK (120 aa).

Belongs to the snaclec family. As to quaternary structure, heterodimer of subunits alpha and beta; disulfide-linked. Expressed by the venom gland.

It localises to the secreted. Snaclec that induces platelet aggregation in either human platelet rich plasma (PRP) or washed platelet suspensions. It causes aggregation in a dose-dependent manner even in the absence of various platelet agonists such as ADP or von Willebrand factor (vWF). Interestingly, it does not induce aggregation in rabbit PRP. A monoclonal antibody against the platelet GPIb receptor blocks the aggregation induced by trimecetin, suggesting that it acts by binding to GPIb (GP1BA/GP1BB). This is Snaclec trimecetin subunit alpha from Protobothrops mucrosquamatus (Taiwan habu).